The following is a 193-amino-acid chain: Apoptosis-associated speck-like protein containing a CARD (193 aa).

A Pyrin domain is found at 1–91 (MGRARDAILD…AEQLQTTKEE (91 aa)). Glycyl lysine isopeptide (Lys-Gly) (interchain with G-Cter in ubiquitin) cross-links involve residues Lys55 and Lys172. The region spanning 105–193 (STARTGHFVD…PYLVMDLEQS (89 aa)) is the CARD domain. Ser193 carries the post-translational modification Phosphoserine.

In terms of assembly, self-associates; enforced oligomerization induces apoptosis, NF-kappa-B regulation and interleukin-1 beta secretion. Homooligomers can form disk-like particles of approximately 12 nm diameter and approximately 1 nm height. Component of several inflammasomes containing one pattern recognition receptor/sensor, such as NLRP2, NLRP3, NLRP6, NLRC4, AIM2, MEFV or NOD2, and probably NLRC4 or NLRP12. Major component of the ASC pyroptosome, a 1-2 um supramolecular assembly (one per macrophage cell) which consists of oligomerized PYCARD dimers and CASP1. Interacts with CASP1 (precursor form); the interaction induces activation of CASP1 leading to the processing of interleukin-1 beta; PYCARD competes with RIPK2 for binding to CASP1. Interacts with NLRP3; the interaction requires the homooligomerization of NLRP3. Interacts with NLRP2, NLRC4, MEFV, CARD16, AIM2, NOD2, RIGI, RIPK2, PYDC1, PYDC2, NLRP10, CHUK, IKBKB and BAX. Interacts with CASP8. Component of the AIM2 PANoptosome complex, a multiprotein complex that drives inflammatory cell death (PANoptosis). In terms of processing, phosphorylated. 'Lys-63'-linked polyubiquitination by TRAF3 is critical for speck formation and inflammasome activation. 'Lys-63'-linked deubiquitinated by USP50; a crucial step for NLRP3-mediated inflammasome activation. 'Lys-63'-linked polyubiquitination by PELI1 is also critical for speck formation and inflammasome activation. Deubiquitinated by USP3 that cleaves 'Lys-48'-linked ubiquitin chains and strengthens its stability by blocking proteasomal degradation. In terms of tissue distribution, expressed in small intestine, colon, thymus, spleen, brain, heart, skeletal muscle, kidney, lung and liver.

It localises to the cytoplasm. It is found in the inflammasome. The protein localises to the endoplasmic reticulum. The protein resides in the mitochondrion. Its subcellular location is the nucleus. Functionally, functions as a key mediator in apoptosis and inflammation. Promotes caspase-mediated apoptosis involving predominantly caspase-8 and also caspase-9 in a probable cell type-specific manner. Involved in activation of the mitochondrial apoptotic pathway, promotes caspase-8-dependent proteolytic maturation of BID independently of FADD in certain cell types and also mediates mitochondrial translocation of BAX and activates BAX-dependent apoptosis coupled to activation of caspase-9, -2 and -3. Involved in innate immune response by acting as an integral adapter in the assembly of various inflammasomes (NLRP2, NLRP3, NLRP6 and AIM2) which recruit and activate caspase-1 leading to processing and secretion of pro-inflammatory cytokines. Caspase-1-dependent inflammation leads to macrophage pyroptosis, a form of cell death. The function as activating adapter in different types of inflammasomes is mediated by the pyrin and CARD domains and their homotypic interactions. Clustered PYCARD nucleates the formation of caspase-1 filaments through the interaction of their respective CARD domains, acting as a platform for of caspase-1 polymerization. In the NLRC4 inflammasomes seems not be required but facilitates the processing of procaspase-1. In cooperation with NOD2 involved in an inflammasome activated by bacterial muramyl dipeptide leading to caspase-1 activation. May be involved in RIGI-triggered pro-inflammatory responses and inflammasome activation. In collaboration with AIM2 which detects cytosolic double-stranded DNA may also be involved in a caspase-1-independent cell death that involves caspase-8. In adaptive immunity may be involved in maturation of dendritic cells to stimulate T-cell immunity and in cytoskeletal rearrangements coupled to chemotaxis and antigen uptake may be involved in post-transcriptional regulation of the guanine nucleotide exchange factor DOCK2; the latter function is proposed to involve the nuclear form. Also involved in transcriptional activation of cytokines and chemokines independent of the inflammasome; this function may involve AP-1, NF-kappa-B, MAPK and caspase-8 signaling pathways. For regulation of NF-kappa-B activating and inhibiting functions have been reported. Modulates NF-kappa-B induction at the level of the IKK complex by inhibiting kinase activity of CHUK and IKBK. Proposed to compete with RIPK2 for association with CASP1 thereby down-regulating CASP1-mediated RIPK2-dependent NF-kappa-B activation and activating interleukin-1 beta processing. Modulates host resistance to DNA virus infection, probably by inducing the cleavage of and inactivating CGAS in presence of cytoplasmic double-stranded DNA. This is Apoptosis-associated speck-like protein containing a CARD (Pycard) from Mus musculus (Mouse).